We begin with the raw amino-acid sequence, 380 residues long: Putative glutamate--cysteine ligase 2 (380 aa).

Belongs to the glutamate--cysteine ligase type 2 family. YbdK subfamily.

It carries out the reaction L-cysteine + L-glutamate + ATP = gamma-L-glutamyl-L-cysteine + ADP + phosphate + H(+). Functionally, ATP-dependent carboxylate-amine ligase which exhibits weak glutamate--cysteine ligase activity. The protein is Putative glutamate--cysteine ligase 2 of Pseudomonas entomophila (strain L48).